A 264-amino-acid polypeptide reads, in one-letter code: Vitellin-degrading protease (264 aa).

The N-terminal stretch at 1–15 (MTNSLLICFTILGLA) is a signal peptide. A propeptide spans 16 to 27 (ASSPTKPIGDIR) (activation peptide). Positions 28-253 (IVGGEDIVIT…LREWVDENIT (226 aa)) constitute a Peptidase S1 domain. A disulfide bridge connects residues Cys-53 and Cys-69. Catalysis depends on charge relay system residues His-68 and Asp-113. A disulfide bond links Cys-178 and Cys-194. Asp-203 is a substrate binding site. The cysteines at positions 205 and 229 are disulfide-linked. Ser-209 (charge relay system) is an active-site residue. Asn-251 carries an N-linked (GlcNAc...) asparagine glycan.

The protein belongs to the peptidase S1 family. In terms of processing, cleavage after Arg-27 leads to beta-VTN protease and subsequent cleavage after Arg-89 leads to alpha-VTN.

In terms of biological role, responsible for the degradation of vitellin in eggs at the head pigmentation stage. This Bombyx mori (Silk moth) protein is Vitellin-degrading protease.